A 165-amino-acid polypeptide reads, in one-letter code: Cysteine-rich hydrophobic domain-containing protein 2 (165 aa).

The stretch at 1-26 (MADFDEIYEEEEDEERALEEQLLKYS) forms a coiled coil. Residues 88-106 (CGCLCCCCTLGCSMWPVIC) carry the CHIC motif (Cys-rich) motif.

This sequence belongs to the CHIC family. Palmitoylation in the CHIC motif is required for membrane association.

The protein localises to the cell membrane. Its subcellular location is the cytoplasmic vesicle. The sequence is that of Cysteine-rich hydrophobic domain-containing protein 2 (CHIC2) from Homo sapiens (Human).